A 160-amino-acid polypeptide reads, in one-letter code: Lipoprotein signal peptidase (160 aa).

Transmembrane regions (helical) follow at residues 60–80 and 84–104; these read TEWL…AFFL and LPFL…AGTI. Active-site residues include Asp-118 and Asp-132. The helical transmembrane segment at 127-147 threads the bilayer; that stretch reads TFNMADSCLTLGIIWLVLLYL.

The protein belongs to the peptidase A8 family.

Its subcellular location is the cell membrane. The enzyme catalyses Release of signal peptides from bacterial membrane prolipoproteins. Hydrolyzes -Xaa-Yaa-Zaa-|-(S,diacylglyceryl)Cys-, in which Xaa is hydrophobic (preferably Leu), and Yaa (Ala or Ser) and Zaa (Gly or Ala) have small, neutral side chains.. Its pathway is protein modification; lipoprotein biosynthesis (signal peptide cleavage). Functionally, this protein specifically catalyzes the removal of signal peptides from prolipoproteins. The sequence is that of Lipoprotein signal peptidase from Dehalococcoides mccartyi (strain ATCC BAA-2266 / KCTC 15142 / 195) (Dehalococcoides ethenogenes (strain 195)).